We begin with the raw amino-acid sequence, 213 residues long: ATP synthase subunit b 2 (213 aa).

Positions 1 to 45 (MFVTEAYAQSAPTVGETHTETPAVGQPQPEATHTETGVAHGAEHG) are disordered. A helical membrane pass occupies residues 57–76 (TYASQVLWLAITFGLFYLLM).

The protein belongs to the ATPase B chain family. F-type ATPases have 2 components, F(1) - the catalytic core - and F(0) - the membrane proton channel. F(1) has five subunits: alpha(3), beta(3), gamma(1), delta(1), epsilon(1). F(0) has three main subunits: a(1), b(2) and c(10-14). The alpha and beta chains form an alternating ring which encloses part of the gamma chain. F(1) is attached to F(0) by a central stalk formed by the gamma and epsilon chains, while a peripheral stalk is formed by the delta and b chains.

It localises to the cell inner membrane. In terms of biological role, f(1)F(0) ATP synthase produces ATP from ADP in the presence of a proton or sodium gradient. F-type ATPases consist of two structural domains, F(1) containing the extramembraneous catalytic core and F(0) containing the membrane proton channel, linked together by a central stalk and a peripheral stalk. During catalysis, ATP synthesis in the catalytic domain of F(1) is coupled via a rotary mechanism of the central stalk subunits to proton translocation. Functionally, component of the F(0) channel, it forms part of the peripheral stalk, linking F(1) to F(0). The b'-subunit is a diverged and duplicated form of b found in plants and photosynthetic bacteria. This chain is ATP synthase subunit b 2 (atpF2), found in Agrobacterium fabrum (strain C58 / ATCC 33970) (Agrobacterium tumefaciens (strain C58)).